Consider the following 247-residue polypeptide: MLLIINNIINNDVPTPWGVYFQDSATPNHEGIIELHDNIMFYLVLILCLVSWLLFSIVKDGSKNPLPHKYLVHGQTIEIIWTILPALVLLVIAFPSFILLYLCDEVISPAMTIKAIGLQWYWKYEYSDFINDSGETIEFESYVIPEDLLEDGQLPLLDTDTSIVCPVNTHIRFIVSAADVIHDFAVPSLGIKIDACPGRLNQVSALIQREGVYYGQCSELCGVAHSAMPIKVEAVSLKEFLTWLNEQ.

A signal peptide spans 1 to 11; sequence MLLIINNIINN. Over 12 to 38 the chain is Mitochondrial intermembrane; that stretch reads DVPTPWGVYFQDSATPNHEGIIELHDN. Residues 39-59 traverse the membrane as a helical segment; it reads IMFYLVLILCLVSWLLFSIVK. The Mitochondrial matrix segment spans residues 60–78; sequence DGSKNPLPHKYLVHGQTIE. Residues 79-101 traverse the membrane as a helical segment; that stretch reads IIWTILPALVLLVIAFPSFILLY. Residues 102-247 lie on the Mitochondrial intermembrane side of the membrane; that stretch reads LCDEVISPAM…KEFLTWLNEQ (146 aa). Histidine 182, cysteine 217, glutamate 219, cysteine 221, histidine 225, and methionine 228 together coordinate Cu cation. Glutamate 219 contributes to the Mg(2+) binding site.

The protein belongs to the cytochrome c oxidase subunit 2 family. As to quaternary structure, component of the cytochrome c oxidase (complex IV, CIV), a multisubunit enzyme composed of a catalytic core of 3 subunits and several supernumerary subunits. The complex exists as a monomer or a dimer and forms supercomplexes (SCs) in the inner mitochondrial membrane with ubiquinol-cytochrome c oxidoreductase (cytochrome b-c1 complex, complex III, CIII). Cu cation serves as cofactor. Post-translationally, the signal sequence of COX2 is processed by IMP1.

Its subcellular location is the mitochondrion inner membrane. It catalyses the reaction 4 Fe(II)-[cytochrome c] + O2 + 8 H(+)(in) = 4 Fe(III)-[cytochrome c] + 2 H2O + 4 H(+)(out). In terms of biological role, component of the cytochrome c oxidase, the last enzyme in the mitochondrial electron transport chain which drives oxidative phosphorylation. The respiratory chain contains 3 multisubunit complexes succinate dehydrogenase (complex II, CII), ubiquinol-cytochrome c oxidoreductase (cytochrome b-c1 complex, complex III, CIII) and cytochrome c oxidase (complex IV, CIV), that cooperate to transfer electrons derived from NADH and succinate to molecular oxygen, creating an electrochemical gradient over the inner membrane that drives transmembrane transport and the ATP synthase. Cytochrome c oxidase is the component of the respiratory chain that catalyzes the reduction of oxygen to water. Electrons originating from reduced cytochrome c in the intermembrane space (IMS) are transferred via the dinuclear copper A center (CU(A)) of subunit 2 and heme A of subunit 1 to the active site in subunit 1, a binuclear center (BNC) formed by heme A3 and copper B (CU(B)). The BNC reduces molecular oxygen to 2 water molecules using 4 electrons from cytochrome c in the IMS and 4 protons from the mitochondrial matrix. This chain is Cytochrome c oxidase subunit 2 (COX2), found in Wickerhamomyces canadensis (Yeast).